The chain runs to 132 residues: Glycine cleavage system H protein (132 aa).

In terms of domain architecture, Lipoyl-binding spans 24–106; the sequence is LVRIGISAFA…HGEGWLLVVR (83 aa). Residue Lys-65 is modified to N6-lipoyllysine.

Belongs to the GcvH family. The glycine cleavage system is composed of four proteins: P, T, L and H. Requires (R)-lipoate as cofactor.

Its function is as follows. The glycine cleavage system catalyzes the degradation of glycine. The H protein shuttles the methylamine group of glycine from the P protein to the T protein. This is Glycine cleavage system H protein from Prochlorococcus marinus (strain MIT 9313).